The chain runs to 569 residues: MARILITSALPYINGVKHLGNLAGSMLPADVYARFQRARGNDTLYICATDEHGTPAELAAAAAGQDVAEYCAEQHVLQHDVGRAFGLSWDHFGRSSSPQNHRLTQHFCEVLEERGLIEERVDQMVYSIDDARFLPDRYIEGTCPHCGFDKARGDQCDNCGNLLDPTELKDPYSVISGSRNLEVRDTRHLYLLQTKMADKIRAWIDSHPDWQLLAKSIAYKHLDEGLIDRGITRDLAWGIPVTKGEFPRPGFEDKVFYVWFDAPIEYIAATQEWADEGAGRDWKSWWRTDEGADDVRYVQFMGKDNVAFHTVSFPATILGSQEPWKSVDMLKAFNWLNWYGGKFSTSNKRGVFMDAALEILPPDFWRWYLTSNAPESSDTAFTWEQFASAVNRDLADVLGNFVNRILKFTEGKFDGVIPDGGAPGPLEEKLYADVSARLADLTEQMDAVEVRKSAQALRALWVVGNEYLQEAAPWTAIKTDRDRAAVIVRTALNLAALYARISAPFIPFAAEKIGEAFQLPWPPVWPTTDAAAELSSLPVGLSVRAPEVLFKKIEDEQIAEWTRRFGGAE.

The 'HIGH' region motif lies at 11-21; that stretch reads PYINGVKHLGN. C143, C146, C156, and C159 together coordinate Zn(2+). A 'KMSKS' region motif is present at residues 342 to 346; that stretch reads KFSTS. T345 serves as a coordination point for ATP.

Belongs to the class-I aminoacyl-tRNA synthetase family. MetG type 1 subfamily. As to quaternary structure, monomer. Requires Zn(2+) as cofactor.

It localises to the cytoplasm. The catalysed reaction is tRNA(Met) + L-methionine + ATP = L-methionyl-tRNA(Met) + AMP + diphosphate. In terms of biological role, is required not only for elongation of protein synthesis but also for the initiation of all mRNA translation through initiator tRNA(fMet) aminoacylation. In Caulobacter sp. (strain K31), this protein is Methionine--tRNA ligase.